The sequence spans 282 residues: Bis(5'-nucleosyl)-tetraphosphatase, symmetrical (282 aa).

It belongs to the Ap4A hydrolase family.

It catalyses the reaction P(1),P(4)-bis(5'-adenosyl) tetraphosphate + H2O = 2 ADP + 2 H(+). Its function is as follows. Hydrolyzes diadenosine 5',5'''-P1,P4-tetraphosphate to yield ADP. This Paraburkholderia phymatum (strain DSM 17167 / CIP 108236 / LMG 21445 / STM815) (Burkholderia phymatum) protein is Bis(5'-nucleosyl)-tetraphosphatase, symmetrical.